The primary structure comprises 560 residues: Nuclear receptor subfamily 5 group A member 2 (560 aa).

The interval 21-55 (IASAPGSETRHSPKREEQLREKRAGLPDRHRRPIP) is disordered. Over residues 28–48 (ETRHSPKREEQLREKRAGLPD) the composition is skewed to basic and acidic residues. The segment at residues 104–175 (EELCPVCGDK…KCIDVGMKLE (72 aa)) is a DNA-binding region (nuclear receptor). The Zn(2+) site is built by Cys-107, Cys-110, Cys-124, Cys-127, Cys-143, Cys-149, Cys-159, and Cys-162. 2 consecutive NR C4-type zinc fingers follow at residues 107-127 (CPVC…CESC) and 143-167 (CIEN…FKKC). The segment at 173 to 188 (KLEAVRADRMRGGRNK) is C-terminal extension (CTE). The short motif at 189-208 (FGPMYKRDRALKQQKKALIR) is the FTZ-F1 box element. Lys-289 participates in a covalent cross-link: Glycyl lysine isopeptide (Lys-Gly) (interchain with G-Cter in SUMO1). Residues 319 to 558 (SIPHLILELL…NLLIEMLHAK (240 aa)) form the NR LBD domain. A phospholipid derivative-binding residues include Tyr-535 and Lys-539. An AF-2 region spans residues 547–558 (YNNLLIEMLHAK).

The protein belongs to the nuclear hormone receptor family. NR5 subfamily. Monomer; Binds DNA as a monomer. Interacts with nuclear receptor corepressors NR0B1 and NR0B2; repressing NR5A2 nuclear receptor activity. Interacts with nuclear receptor coactivators CTNNB1, PPARGC1A and NCOA2; interaction takes place following ligand-binding and promotes target gene activation. Interacts (when sumoylated) with GPS2; interaction with GPS2 onto hepatic acute phase protein promoters prevents N-Cor corepressor complex dissociation. Interacts with HNF1A. Interacts with GRIP1. Post-translationally, sumoylated by SUMO1 at Lys-289 during the hepatic acute phase response, leading to promote interaction with GPS2 and prevent N-Cor corepressor complex dissociation.

It localises to the nucleus. It is found in the chromosome. Its function is as follows. Orphan nuclear receptor that binds DNA as a monomer to the 5'-TCAAGGCCA-3' sequence and controls expression of target genes: regulates key biological processes, such as early embryonic development, cholesterol and bile acid synthesis pathways, as well as liver and pancreas morphogenesis. Ligand-binding causes conformational change which causes recruitment of coactivators, promoting target gene activation. The specific ligand is unknown, but specific phospholipids, such as phosphatidylethanolamine, phosphatidylserine, dilauroyl phosphatidylcholine and diundecanoyl phosphatidylcholine can act as ligand in vitro. Acts as a pioneer transcription factor, which unwraps target DNA from histones and elicits local opening of closed chromatin. Plays a central role during preimplantation stages of embryonic development. Plays a minor role in zygotic genome activation (ZGA) by regulating a small set of two-cell stage genes. Plays a major role in morula development (2-16 cells embryos) by acting as a master regulator at the 8-cell stage, controlling expression of lineage-specifying transcription factors and genes involved in mitosis, telomere maintenance and DNA repair. Zygotic NR5A2 binds to both closed and open chromatin with other transcription factors, often at SINE B1/Alu repeats DNA elements, promoting chromatin accessibility at nearby regulatory regions. Also involved in the epiblast stage of development and embryonic stem cell pluripotency, by promoting expression of POU5F1/OCT4. Regulates other processes later in development, such as formation of connective tissue in lower jaw and middle ear, neural stem cell differentiation, ovarian follicle development and Sertoli cell differentiation. Involved in exocrine pancreas development and acinar cell differentiation. Acts as an essential transcriptional regulator of lipid metabolism. Key regulator of cholesterol 7-alpha-hydroxylase gene (CYP7A) expression in liver. Activates the transcription of CYP2C38. Also acts as a negative regulator of inflammation in different organs, such as intestine, liver and pancreas. Protects against intestinal inflammation via its ability to regulate glucocorticoid production. Plays an anti-inflammatory role during the hepatic acute phase response by acting as a corepressor: inhibits the hepatic acute phase response by preventing dissociation of the N-Cor corepressor complex. Acts as a regulator of immunity by promoting lymphocyte T-cell development, proliferation and effector functions. Also involved in resolution of endoplasmic reticulum stress in the liver. The polypeptide is Nuclear receptor subfamily 5 group A member 2 (Mus musculus (Mouse)).